Consider the following 879-residue polypeptide: Alanine--tRNA ligase (879 aa).

Residues histidine 566, histidine 570, cysteine 668, and histidine 672 each coordinate Zn(2+).

It belongs to the class-II aminoacyl-tRNA synthetase family. Zn(2+) serves as cofactor.

The protein resides in the cytoplasm. It carries out the reaction tRNA(Ala) + L-alanine + ATP = L-alanyl-tRNA(Ala) + AMP + diphosphate. In terms of biological role, catalyzes the attachment of alanine to tRNA(Ala) in a two-step reaction: alanine is first activated by ATP to form Ala-AMP and then transferred to the acceptor end of tRNA(Ala). Also edits incorrectly charged Ser-tRNA(Ala) and Gly-tRNA(Ala) via its editing domain. This Clostridium botulinum (strain Alaska E43 / Type E3) protein is Alanine--tRNA ligase.